A 122-amino-acid chain; its full sequence is Large ribosomal subunit protein uL14c (122 aa).

Belongs to the universal ribosomal protein uL14 family. Part of the 50S ribosomal subunit.

The protein resides in the plastid. The protein localises to the chloroplast. In terms of biological role, binds to 23S rRNA. The polypeptide is Large ribosomal subunit protein uL14c (Acorus calamus (Sweet flag)).